Reading from the N-terminus, the 269-residue chain is Flagellar brake protein YcgR (269 aa).

Residues 1–42 (MLREPMNQHDAPGPAETGADSDAETDAETDAETDAGAADDRY) are disordered. The span at 19-33 (ADSDAETDAETDAET) shows a compositional bias: acidic residues. The PilZ domain occupies 149–261 (QRRRHFRART…MENFLQRLVF (113 aa)).

It belongs to the YcgR family. As to quaternary structure, monomer. Interacts with the flagellar basal bodies.

The protein resides in the bacterial flagellum basal body. Functionally, acts as a flagellar brake, regulating swimming and swarming in a bis-(3'-5') cyclic diguanylic acid (c-di-GMP)-dependent manner. Binds 1 c-di-GMP dimer per subunit. Increasing levels of c-di-GMP lead to decreased motility. The chain is Flagellar brake protein YcgR from Cupriavidus taiwanensis (strain DSM 17343 / BCRC 17206 / CCUG 44338 / CIP 107171 / LMG 19424 / R1) (Ralstonia taiwanensis (strain LMG 19424)).